Reading from the N-terminus, the 578-residue chain is uncharacterized protein (578 aa).

This is an uncharacterized protein from Ostreid herpesvirus 1 (isolate France) (OsHV-1).